The chain runs to 342 residues: Holliday junction branch migration complex subunit RuvB (342 aa).

The large ATPase domain (RuvB-L) stretch occupies residues 1–184 (MEEDFNIRDH…FGINLHLEYY (184 aa)). ATP-binding positions include leucine 23, arginine 24, glycine 65, lysine 68, threonine 69, threonine 70, 131–133 (EDY), arginine 174, tyrosine 184, and arginine 221. Threonine 69 is a binding site for Mg(2+). The segment at 185 to 255 (DDDILSNIIS…IANYALEALN (71 aa)) is small ATPAse domain (RuvB-S). Residues 258–342 (KYGLDEIDNK…YNSQKTLFND (85 aa)) are head domain (RuvB-H). Positions 313 and 318 each coordinate DNA.

Belongs to the RuvB family. As to quaternary structure, homohexamer. Forms an RuvA(8)-RuvB(12)-Holliday junction (HJ) complex. HJ DNA is sandwiched between 2 RuvA tetramers; dsDNA enters through RuvA and exits via RuvB. An RuvB hexamer assembles on each DNA strand where it exits the tetramer. Each RuvB hexamer is contacted by two RuvA subunits (via domain III) on 2 adjacent RuvB subunits; this complex drives branch migration. In the full resolvosome a probable DNA-RuvA(4)-RuvB(12)-RuvC(2) complex forms which resolves the HJ.

It localises to the cytoplasm. The catalysed reaction is ATP + H2O = ADP + phosphate + H(+). Functionally, the RuvA-RuvB-RuvC complex processes Holliday junction (HJ) DNA during genetic recombination and DNA repair, while the RuvA-RuvB complex plays an important role in the rescue of blocked DNA replication forks via replication fork reversal (RFR). RuvA specifically binds to HJ cruciform DNA, conferring on it an open structure. The RuvB hexamer acts as an ATP-dependent pump, pulling dsDNA into and through the RuvAB complex. RuvB forms 2 homohexamers on either side of HJ DNA bound by 1 or 2 RuvA tetramers; 4 subunits per hexamer contact DNA at a time. Coordinated motions by a converter formed by DNA-disengaged RuvB subunits stimulates ATP hydrolysis and nucleotide exchange. Immobilization of the converter enables RuvB to convert the ATP-contained energy into a lever motion, pulling 2 nucleotides of DNA out of the RuvA tetramer per ATP hydrolyzed, thus driving DNA branch migration. The RuvB motors rotate together with the DNA substrate, which together with the progressing nucleotide cycle form the mechanistic basis for DNA recombination by continuous HJ branch migration. Branch migration allows RuvC to scan DNA until it finds its consensus sequence, where it cleaves and resolves cruciform DNA. The sequence is that of Holliday junction branch migration complex subunit RuvB from Bacteroides fragilis (strain ATCC 25285 / DSM 2151 / CCUG 4856 / JCM 11019 / LMG 10263 / NCTC 9343 / Onslow / VPI 2553 / EN-2).